Consider the following 218-residue polypeptide: uncharacterized protein (218 aa).

This is an uncharacterized protein from Orgyia pseudotsugata multicapsid polyhedrosis virus (OpMNPV).